The primary structure comprises 186 residues: Iodotyrosine deiodinase (186 aa).

FMN is bound by residues 11 to 15 (RKTVR), 38 to 39 (PS), and S39. Residues M41, E68, Y72, and K92 each contribute to the 3-iodo-L-tyrosine site. Positions 41, 68, 72, and 92 each coordinate L-tyrosine. An FMN-binding site is contributed by R176.

This sequence belongs to the nitroreductase family. Homodimer. Requires FMN as cofactor.

It catalyses the reaction 2 iodide + L-tyrosine + 2 NADP(+) = 3,5-diiodo-L-tyrosine + 2 NADPH + H(+). The catalysed reaction is iodide + L-tyrosine + NADP(+) = 3-iodo-L-tyrosine + NADPH. The enzyme catalyses 3-iodo-L-tyrosine + iodide + NADP(+) = 3,5-diiodo-L-tyrosine + NADPH + H(+). It carries out the reaction L-tyrosine + chloride + NADP(+) = 3-chloro-L-tyrosine + NADPH. It catalyses the reaction bromide + L-tyrosine + NADP(+) = 3-bromo-L-tyrosine + NADPH. Catalyzes the dehalogenation of halotyrosines such as 3-bromo-L-tyrosine, 3-chloro-L-tyrosine, 3-iodo-L-tyrosine and 3,5-diiodo-L-tyrosine. Activity towards 2-iodophenol is weak. The protein is Iodotyrosine deiodinase of Thermotoga neapolitana (strain ATCC 49049 / DSM 4359 / NBRC 107923 / NS-E).